The sequence spans 450 residues: Glucose-6-phosphate isomerase (450 aa).

E291 functions as the Proton donor in the catalytic mechanism. Active-site residues include H312 and K426.

It belongs to the GPI family.

Its subcellular location is the cytoplasm. The enzyme catalyses alpha-D-glucose 6-phosphate = beta-D-fructose 6-phosphate. The protein operates within carbohydrate biosynthesis; gluconeogenesis. It participates in carbohydrate degradation; glycolysis; D-glyceraldehyde 3-phosphate and glycerone phosphate from D-glucose: step 2/4. In terms of biological role, catalyzes the reversible isomerization of glucose-6-phosphate to fructose-6-phosphate. The polypeptide is Glucose-6-phosphate isomerase (Clostridium perfringens (strain SM101 / Type A)).